The primary structure comprises 72 residues: Small ribosomal subunit protein eS17 (72 aa).

It belongs to the eukaryotic ribosomal protein eS17 family.

The sequence is that of Small ribosomal subunit protein eS17 from Nanoarchaeum equitans (strain Kin4-M).